Consider the following 304-residue polypeptide: Elongation factor Ts (304 aa).

The involved in Mg(2+) ion dislocation from EF-Tu stretch occupies residues 82-85 (TDFV).

Belongs to the EF-Ts family.

The protein localises to the cytoplasm. Its function is as follows. Associates with the EF-Tu.GDP complex and induces the exchange of GDP to GTP. It remains bound to the aminoacyl-tRNA.EF-Tu.GTP complex up to the GTP hydrolysis stage on the ribosome. The chain is Elongation factor Ts from Symbiobacterium thermophilum (strain DSM 24528 / JCM 14929 / IAM 14863 / T).